The chain runs to 319 residues: Dehydrogenase/reductase SDR family member 9 (319 aa).

An N-terminal signal peptide occupies residues 1-17 (MLFWLLVLLILCGFLWN). Residues 34–58 (ITGCDTGFGNLAARTFDKKGFHVIA) and Asp-83 contribute to the NAD(+) site. Ser-164 is a substrate binding site. Tyr-176 functions as the Proton acceptor in the catalytic mechanism. Lys-180 is an NAD(+) binding site.

Belongs to the short-chain dehydrogenases/reductases (SDR) family. In terms of assembly, homotetramer.

It is found in the microsome membrane. The protein localises to the endoplasmic reticulum membrane. It carries out the reaction 3beta-hydroxy-5alpha-pregnane-20-one + NAD(+) = 5alpha-pregnane-3,20-dione + NADH + H(+). It catalyses the reaction 17beta-hydroxy-5alpha-androstan-3-one + NAD(+) = 5alpha-androstan-3,17-dione + NADH + H(+). The enzyme catalyses androsterone + NAD(+) = 5alpha-androstan-3,17-dione + NADH + H(+). The catalysed reaction is 5alpha-androstane-3alpha,17beta-diol + NAD(+) = 17beta-hydroxy-5alpha-androstan-3-one + NADH + H(+). It carries out the reaction all-trans-retinol + NAD(+) = all-trans-retinal + NADH + H(+). It catalyses the reaction 3alpha-hydroxy-5alpha-pregnan-20-one + NAD(+) = 5alpha-pregnane-3,20-dione + NADH + H(+). In terms of biological role, 3-alpha-hydroxysteroid dehydrogenase that converts 3-alpha-tetrahydroprogesterone (allopregnanolone) to dihydroxyprogesterone and 3-alpha-androstanediol to dihydroxyprogesterone. Also plays a role in the biosynthesis of retinoic acid from retinaldehyde. Can utilize both NADH and NADPH. The protein is Dehydrogenase/reductase SDR family member 9 (DHRS9) of Bos taurus (Bovine).